Reading from the N-terminus, the 977-residue chain is MAATMIFGSFTHDLLGKAMSTIHSAVTAEKDIFSSIKERLERKRHGKICRMKNGSIYIKAASSTKVEKINAAAKKLADDKAAFLKAQPTIVDKIIVNEKIQVVEAEEVHKREDVQTVFFKKTKKRAPKLRATCSSSGLDNLYNAVANIAKASSLRVEVIHKKRVCGEFKQTRFGRALFIDVAHAKGHRRRIDCRMHRREQRTMHMFMRKTTKTEVRSKHLRKGDSGIVLLTQKIKGHLSGVRDEFFIVRGTCDDSLLEARARFSQSITLRATHFSTGDIFWKGFNASFQEQKAIGLDHTCTSDLPVEACGHVAALMCQSLFPCGKITCKRCIANLSNLDFDTFSELQGDRAMRILDVMRARFPSFTHTIRFLHDLFTQRRVTNPNTAAFREILRLIGDRNEAPFAHVNRLNEILLLGSKANPDSLAKASDSLLELARYLNNRTENIRNGSLKHFRNKISSKAHSNLALSCDNQLDQNGNFLWGLAGIAAKRFLNNYFETIDPEQGYDKYVIRKNPNGERKLAIGNFIISTNLEKLRDQLEGESIARVGITEECVSRKDGNYRYPCCCVTLEDGSPMYSELKMPTKNHLVIGNSGDPKYLDLPGEISNLMYIAKEGYCYINIFLAMLVNVDEANAKDFTKRVRDESVQKLGKWPSLIDVATECALLSTYYPAAASAELPRLLVDHAQKTIHVVDSYGSLNTGYHILKANTVSQLEKFASNTLESPMAQYKVGGLVYSENNDASAVKALTQAIFRPDVLSELIEKEPYLMVFALVSPGILMAMSNSGALEFGISKWISSDHSLVRMASILKTLASKVSVADTLALQKHIMRQNANFLCGELINGFQKKKSYTHATRFLLMISEENEMDDPVLNAGYRVLEASSHEIMEKNLSRTVRDILVRLKLVWKIQVNLVYAKALWKIQSRIVPKRADRLARTLQQLVAVSLPEYAQALEKQGESVSRKIFGKHFKCKTQDNMCSF.

The Peptidase S30 domain occupies T132 to F274. Catalysis depends on for P1 proteinase activity residues H183, D192, and S225. The Involved in interaction with stylet and aphid transmission signature appears at K325–C328. The Involved in virions binding and aphid transmission signature appears at P583–K585. Residues M609–G731 enclose the Peptidase C6 domain. Active-site for helper component proteinase activity residues include C617 and H690.

Belongs to the potyviridae P3N-PIPO polyprotein family. As to quaternary structure, interacts (via PIPO domain) with host PCaP1 protein; this interaction may help to anchor the movement complex to the plasma membrane from which the complex could move to the plasmodesmata. Post-translationally, potyviral RNA is expressed as two polyproteins which undergo post-translational proteolytic processing. Genome polyprotein is processed by NIa-pro, P1 and HC-pro proteinases resulting in the production of at least ten individual proteins. P3N-PIPO is cleaved by P1 and HC-pro proteinases resulting in the production of three individual proteins. The P1 proteinase and the HC-pro cleave only their respective C-termini autocatalytically.

The protein localises to the host cell junction. It localises to the host plasmodesma. The catalysed reaction is Hydrolyzes a Gly-|-Gly bond at its own C-terminus, commonly in the sequence -Tyr-Xaa-Val-Gly-|-Gly, in the processing of the potyviral polyprotein.. In terms of biological role, required for aphid transmission and also has proteolytic activity. Only cleaves a Gly-Gly dipeptide at its own C-terminus. Interacts with virions and aphid stylets. Acts as a suppressor of RNA-mediated gene silencing, also known as post-transcriptional gene silencing (PTGS), a mechanism of plant viral defense that limits the accumulation of viral RNAs. May have RNA-binding activity. Functionally, allows efficient cell to cell propagation, by bypassing the host cell wall barrier. Transports viral genome to neighboring plant cells directly through plasmosdesmata, without any budding. This chain is P3N-PIPO polyprotein, found in Nicotiana tabacum (Common tobacco).